The primary structure comprises 282 residues: ATP phosphoribosyltransferase (282 aa).

Belongs to the ATP phosphoribosyltransferase family. Long subfamily. Mg(2+) is required as a cofactor.

Its subcellular location is the cytoplasm. It catalyses the reaction 1-(5-phospho-beta-D-ribosyl)-ATP + diphosphate = 5-phospho-alpha-D-ribose 1-diphosphate + ATP. Its pathway is amino-acid biosynthesis; L-histidine biosynthesis; L-histidine from 5-phospho-alpha-D-ribose 1-diphosphate: step 1/9. With respect to regulation, feedback inhibited by histidine. Catalyzes the condensation of ATP and 5-phosphoribose 1-diphosphate to form N'-(5'-phosphoribosyl)-ATP (PR-ATP). Has a crucial role in the pathway because the rate of histidine biosynthesis seems to be controlled primarily by regulation of HisG enzymatic activity. The polypeptide is ATP phosphoribosyltransferase (Halobacterium salinarum (strain ATCC 29341 / DSM 671 / R1)).